The chain runs to 432 residues: Cyclic di-GMP phosphodiesterase CdgJ (432 aa).

One can recognise an EAL domain in the interval 1–232 (MVRCLWAAEC…QRYVSPEHVI (232 aa)). The region spanning 226–413 (VSPEHVIAMQ…CLELGFDLED (188 aa)) is the HDOD domain.

It carries out the reaction 3',3'-c-di-GMP + H2O = 5'-phosphoguanylyl(3'-&gt;5')guanosine + H(+). Functionally, phosphodiesterase (PDE) that catalyzes the hydrolysis of cyclic diguanylate (c-di-GMP). Positively regulates motility and negatively regulates biofilm formation. This chain is Cyclic di-GMP phosphodiesterase CdgJ, found in Vibrio cholerae serotype O1 (strain ATCC 39315 / El Tor Inaba N16961).